The primary structure comprises 28 residues: Caerulein precursor fragment B1 (28 aa).

Belongs to the gastrin/cholecystokinin family. Expressed by the skin glands.

The protein localises to the secreted. Its function is as follows. Peptide CPF-B1: Has antimicrobial activity against Gram-negative bacteria E.coli ATCC 25922 (MIC=5 uM) and multidrug-resistant A.baumannii (MIC=4-8 uM), against Gram-positive bacteria S.aureus ATCC 25923 (MIC=5 uM) and methicillin-resistant S.aureus and against fungus C.albicans ATCC 90028 (MIC=25 uM). Has some hemolytic activity against human erythrocytes at high concentrations. The protein is Caerulein precursor fragment B1 of Xenopus borealis (Kenyan clawed frog).